Reading from the N-terminus, the 336-residue chain is Holliday junction branch migration complex subunit RuvB (336 aa).

The large ATPase domain (RuvB-L) stretch occupies residues 4 to 184 (SDRLISSQSI…FGIVQRLEYY (181 aa)). ATP contacts are provided by residues I23, R24, G65, K68, T69, T70, 131-133 (EDY), R174, Y184, and R221. Residue T69 coordinates Mg(2+). The small ATPAse domain (RuvB-S) stretch occupies residues 185–255 (SVDSLTKIVA…MAQQALEMLE (71 aa)). The tract at residues 258–336 (QHGFDLMDRK…HFGFSAIEQE (79 aa)) is head domain (RuvB-H). 2 residues coordinate DNA: R313 and R318.

Belongs to the RuvB family. As to quaternary structure, homohexamer. Forms an RuvA(8)-RuvB(12)-Holliday junction (HJ) complex. HJ DNA is sandwiched between 2 RuvA tetramers; dsDNA enters through RuvA and exits via RuvB. An RuvB hexamer assembles on each DNA strand where it exits the tetramer. Each RuvB hexamer is contacted by two RuvA subunits (via domain III) on 2 adjacent RuvB subunits; this complex drives branch migration. In the full resolvosome a probable DNA-RuvA(4)-RuvB(12)-RuvC(2) complex forms which resolves the HJ.

Its subcellular location is the cytoplasm. The catalysed reaction is ATP + H2O = ADP + phosphate + H(+). Its function is as follows. The RuvA-RuvB-RuvC complex processes Holliday junction (HJ) DNA during genetic recombination and DNA repair, while the RuvA-RuvB complex plays an important role in the rescue of blocked DNA replication forks via replication fork reversal (RFR). RuvA specifically binds to HJ cruciform DNA, conferring on it an open structure. The RuvB hexamer acts as an ATP-dependent pump, pulling dsDNA into and through the RuvAB complex. RuvB forms 2 homohexamers on either side of HJ DNA bound by 1 or 2 RuvA tetramers; 4 subunits per hexamer contact DNA at a time. Coordinated motions by a converter formed by DNA-disengaged RuvB subunits stimulates ATP hydrolysis and nucleotide exchange. Immobilization of the converter enables RuvB to convert the ATP-contained energy into a lever motion, pulling 2 nucleotides of DNA out of the RuvA tetramer per ATP hydrolyzed, thus driving DNA branch migration. The RuvB motors rotate together with the DNA substrate, which together with the progressing nucleotide cycle form the mechanistic basis for DNA recombination by continuous HJ branch migration. Branch migration allows RuvC to scan DNA until it finds its consensus sequence, where it cleaves and resolves cruciform DNA. This is Holliday junction branch migration complex subunit RuvB from Legionella pneumophila (strain Paris).